We begin with the raw amino-acid sequence, 48 residues long: Lantibiotic salivaricin-A (48 aa).

A propeptide spanning residues 1-26 (MKNSKDILNNAIEEVSEKELMEVAGG) is cleaved from the precursor. 2 consecutive cross-links (beta-methyllanthionine (Thr-Cys)) follow at residues 35–40 (TITDDC) and 37–47 (TDDCPNSVFVC). The lanthionine (Ser-Cys) cross-link spans 43–48 (SVFVCC).

Belongs to the type A lantibiotic family. Maturation of lantibiotics involves the enzymatic conversion of Thr, and Ser into dehydrated AA and the formation of thioether bonds with cysteine. This is followed by membrane translocation and cleavage of the modified precursor.

In terms of biological role, lanthionine-containing peptide antibiotic (lantibiotic) active on Gram-positive bacteria. The bactericidal activity of lantibiotics is based on depolarization of energized bacterial cytoplasmic membranes, initiated by the formation of aqueous transmembrane pores. This chain is Lantibiotic salivaricin-A (salA), found in Streptococcus salivarius.